A 490-amino-acid chain; its full sequence is Glutamyl-tRNA(Gln) amidotransferase subunit A (490 aa).

Catalysis depends on charge relay system residues K78 and S153. The active-site Acyl-ester intermediate is the S177.

Belongs to the amidase family. GatA subfamily. Heterotrimer of A, B and C subunits.

It catalyses the reaction L-glutamyl-tRNA(Gln) + L-glutamine + ATP + H2O = L-glutaminyl-tRNA(Gln) + L-glutamate + ADP + phosphate + H(+). Its function is as follows. Allows the formation of correctly charged Gln-tRNA(Gln) through the transamidation of misacylated Glu-tRNA(Gln) in organisms which lack glutaminyl-tRNA synthetase. The reaction takes place in the presence of glutamine and ATP through an activated gamma-phospho-Glu-tRNA(Gln). This is Glutamyl-tRNA(Gln) amidotransferase subunit A from Desulforapulum autotrophicum (strain ATCC 43914 / DSM 3382 / VKM B-1955 / HRM2) (Desulfobacterium autotrophicum).